The sequence spans 643 residues: Phosphomethylpyrimidine synthase (643 aa).

Substrate contacts are provided by residues N248, M277, Y306, H342, 362-364 (SRG), 403-406 (DGLR), and E442. H446 provides a ligand contact to Zn(2+). Residue Y469 participates in substrate binding. Residue H510 coordinates Zn(2+). Residues C590, C593, and C598 each coordinate [4Fe-4S] cluster.

It belongs to the ThiC family. As to quaternary structure, homodimer. [4Fe-4S] cluster serves as cofactor.

The catalysed reaction is 5-amino-1-(5-phospho-beta-D-ribosyl)imidazole + S-adenosyl-L-methionine = 4-amino-2-methyl-5-(phosphooxymethyl)pyrimidine + CO + 5'-deoxyadenosine + formate + L-methionine + 3 H(+). The protein operates within cofactor biosynthesis; thiamine diphosphate biosynthesis. Its function is as follows. Catalyzes the synthesis of the hydroxymethylpyrimidine phosphate (HMP-P) moiety of thiamine from aminoimidazole ribotide (AIR) in a radical S-adenosyl-L-methionine (SAM)-dependent reaction. The protein is Phosphomethylpyrimidine synthase of Paraburkholderia xenovorans (strain LB400).